A 493-amino-acid chain; its full sequence is Glutamyl-tRNA(Gln) amidotransferase subunit A (493 aa).

Catalysis depends on charge relay system residues lysine 78 and serine 158. The Acyl-ester intermediate role is filled by serine 182.

Belongs to the amidase family. GatA subfamily. As to quaternary structure, heterotrimer of A, B and C subunits.

It catalyses the reaction L-glutamyl-tRNA(Gln) + L-glutamine + ATP + H2O = L-glutaminyl-tRNA(Gln) + L-glutamate + ADP + phosphate + H(+). Allows the formation of correctly charged Gln-tRNA(Gln) through the transamidation of misacylated Glu-tRNA(Gln) in organisms which lack glutaminyl-tRNA synthetase. The reaction takes place in the presence of glutamine and ATP through an activated gamma-phospho-Glu-tRNA(Gln). The polypeptide is Glutamyl-tRNA(Gln) amidotransferase subunit A (Rickettsia canadensis (strain McKiel)).